We begin with the raw amino-acid sequence, 225 residues long: Glutathione S-transferase U3 (225 aa).

The GST N-terminal domain maps to 6–86 (EGVKLIGSWA…YIDQTWTNNP (81 aa)). Residues 16 to 17 (SP), 43 to 44 (VK), 57 to 58 (KV), and 70 to 71 (ES) contribute to the glutathione site. One can recognise a GST C-terminal domain in the interval 91–218 (SPYDKAMARF…EKHIEHMMKI (128 aa)). Thr-152 carries the phosphothreonine modification.

The protein belongs to the GST superfamily. Tau family.

It is found in the cytoplasm. The protein localises to the cytosol. It carries out the reaction RX + glutathione = an S-substituted glutathione + a halide anion + H(+). Its function is as follows. May be involved in the conjugation of reduced glutathione to a wide number of exogenous and endogenous hydrophobic electrophiles and have a detoxification role against certain herbicides. The sequence is that of Glutathione S-transferase U3 (GSTU3) from Arabidopsis thaliana (Mouse-ear cress).